Consider the following 183-residue polypeptide: MELVVGRVAKSHGIKGEIVVEVRTDEPEDRFAVGAVLRGHKPREQTVSTYTVEAARDHSGRLLLRLEGVSDRTAADALRGTLFVIDSAELEPSDDPDEFYDHELEGLSVRLADGTEVGTVIEVLHSAAGELLSIRRAGDQSGELLVPFVAAIVTSVSVADGVALIDPPEGLLDPDFGESADGK.

One can recognise a PRC barrel domain in the interval 96–171 (PDEFYDHELE…VALIDPPEGL (76 aa)).

Belongs to the RimM family. Binds ribosomal protein uS19.

It is found in the cytoplasm. In terms of biological role, an accessory protein needed during the final step in the assembly of 30S ribosomal subunit, possibly for assembly of the head region. Essential for efficient processing of 16S rRNA. May be needed both before and after RbfA during the maturation of 16S rRNA. It has affinity for free ribosomal 30S subunits but not for 70S ribosomes. This Rhodococcus jostii (strain RHA1) protein is Ribosome maturation factor RimM.